The following is a 161-amino-acid chain: 3-isopropylmalate dehydratase small subunit (161 aa).

It belongs to the LeuD family. LeuD type 2 subfamily. Heterodimer of LeuC and LeuD.

The catalysed reaction is (2R,3S)-3-isopropylmalate = (2S)-2-isopropylmalate. Its pathway is amino-acid biosynthesis; L-leucine biosynthesis; L-leucine from 3-methyl-2-oxobutanoate: step 2/4. In terms of biological role, catalyzes the isomerization between 2-isopropylmalate and 3-isopropylmalate, via the formation of 2-isopropylmaleate. The sequence is that of 3-isopropylmalate dehydratase small subunit from Metallosphaera sedula (strain ATCC 51363 / DSM 5348 / JCM 9185 / NBRC 15509 / TH2).